A 33-amino-acid chain; its full sequence is Cytochrome b6-f complex subunit 8 (33 aa).

A helical transmembrane segment spans residues Ile2 to Val22.

This sequence belongs to the PetN family. As to quaternary structure, the 4 large subunits of the cytochrome b6-f complex are cytochrome b6, subunit IV (17 kDa polypeptide, PetD), cytochrome f and the Rieske protein, while the 4 small subunits are PetG, PetL, PetM and PetN. The complex functions as a dimer.

The protein localises to the cellular thylakoid membrane. Component of the cytochrome b6-f complex, which mediates electron transfer between photosystem II (PSII) and photosystem I (PSI), cyclic electron flow around PSI, and state transitions. The protein is Cytochrome b6-f complex subunit 8 of Prochlorococcus marinus (strain NATL2A).